The primary structure comprises 60 residues: Large ribosomal subunit protein bL32 (60 aa).

The disordered stretch occupies residues 1–36 (MAVQQNKKSPSKRGMHRSHNALNTPGLAIEPTTGET). Basic residues predominate over residues 9–19 (SPSKRGMHRSH).

The protein belongs to the bacterial ribosomal protein bL32 family.

In Methylibium petroleiphilum (strain ATCC BAA-1232 / LMG 22953 / PM1), this protein is Large ribosomal subunit protein bL32.